A 321-amino-acid polypeptide reads, in one-letter code: ATP-dependent 6-phosphofructokinase (321 aa).

Gly-12 contributes to the ATP binding site. Residues Arg-22–Arg-26 and Arg-55–Asp-60 each bind ADP. Residues Arg-73–Phe-74 and Gly-103–Ser-106 each bind ATP. Position 104 (Asp-104) interacts with Mg(2+). A substrate-binding site is contributed by Thr-127–Asp-129. Asp-129 (proton acceptor) is an active-site residue. Arg-156 is an ADP binding site. Substrate-binding positions include Arg-164 and Met-171–Arg-173. Residues Gly-187–Glu-189, Arg-213, and Lys-215–His-217 each bind ADP. Residues Glu-224, Arg-245, and His-251–Arg-254 contribute to the substrate site.

The protein belongs to the phosphofructokinase type A (PFKA) family. ATP-dependent PFK group I subfamily. Prokaryotic clade 'B1' sub-subfamily. In terms of assembly, homotetramer. Mg(2+) is required as a cofactor.

The protein resides in the cytoplasm. The enzyme catalyses beta-D-fructose 6-phosphate + ATP = beta-D-fructose 1,6-bisphosphate + ADP + H(+). It participates in carbohydrate degradation; glycolysis; D-glyceraldehyde 3-phosphate and glycerone phosphate from D-glucose: step 3/4. With respect to regulation, allosterically activated by ADP and other diphosphonucleosides, and allosterically inhibited by phosphoenolpyruvate. Catalyzes the phosphorylation of D-fructose 6-phosphate to fructose 1,6-bisphosphate by ATP, the first committing step of glycolysis. This chain is ATP-dependent 6-phosphofructokinase, found in Haemophilus influenzae (strain PittEE).